The sequence spans 513 residues: Histidine ammonia-lyase (513 aa).

Residues 142-144 (ASG) constitute a cross-link (5-imidazolinone (Ala-Gly)). 2,3-didehydroalanine (Ser) is present on serine 143.

Belongs to the PAL/histidase family. In terms of processing, contains an active site 4-methylidene-imidazol-5-one (MIO), which is formed autocatalytically by cyclization and dehydration of residues Ala-Ser-Gly.

It is found in the cytoplasm. It carries out the reaction L-histidine = trans-urocanate + NH4(+). Its pathway is amino-acid degradation; L-histidine degradation into L-glutamate; N-formimidoyl-L-glutamate from L-histidine: step 1/3. The polypeptide is Histidine ammonia-lyase (Hyphomonas neptunium (strain ATCC 15444)).